The following is a 513-amino-acid chain: Sphingosine-1-phosphate transporter SPNS2 (513 aa).

The next 11 helical transmembrane spans lie at 102-122 (GLLQ…FGYL), 130-150 (VILS…SFIP), 163-183 (LVGI…GDLF), 190-210 (LMLS…YITG), 222-242 (WALR…LIFV), 276-296 (LATS…PLYL), 320-340 (LIFG…GAGA), 354-374 (LVCA…FVAA), 378-398 (IIAA…NWAI), 422-442 (TSHL…SDLI), and 463-483 (LCPF…LFFL).

This sequence belongs to the major facilitator superfamily. Spinster (TC 2.A.1.49) family.

It is found in the cell membrane. It localises to the endosome membrane. It catalyses the reaction sphing-4-enine 1-phosphate(in) = sphing-4-enine 1-phosphate(out). The enzyme catalyses sphinganine 1-phosphate(in) = sphinganine 1-phosphate(out). Functionally, lipid transporter that specifically mediates export of sphingosine-1-phosphate (sphing-4-enine 1-phosphate, S1P) and sphinganine-1-phosphate. In Xenopus tropicalis (Western clawed frog), this protein is Sphingosine-1-phosphate transporter SPNS2 (spns2).